Consider the following 151-residue polypeptide: Large ribosomal subunit protein uL15 (151 aa).

Residues 1–58 form a disordered region; sequence MELNQLKSVPKARNHKTKTLGRGHGSGLGKTSGRGQKGQKARKSGLTRPGFEGGQTPL. The segment covering 10 to 21 has biased composition (basic residues); it reads PKARNHKTKTLG. Residues 22 to 36 are compositionally biased toward gly residues; sequence RGHGSGLGKTSGRGQ.

It belongs to the universal ribosomal protein uL15 family. Part of the 50S ribosomal subunit.

Binds to the 23S rRNA. The polypeptide is Large ribosomal subunit protein uL15 (Mycoplasma pneumoniae (strain ATCC 29342 / M129 / Subtype 1) (Mycoplasmoides pneumoniae)).